The sequence spans 213 residues: MISFLRGTVAHVGLSTAVIDLNGAGMSVYATPQTLSRLHVGEEGKVFTSLIVREDSMTLFGFADDDEREVFEVLLSVSGVGPRLALAVLAVHDPEAIRVAAHTGDNKTFTKVPGIGPKVAGRIVLELAGKLVPHGTAPAAATTAAEASWKPQVVAAMTSLGWSEKDASASIDKALADEPEVSFRGNVPEILRTTLRWLGQDGARAGNRVGSRG.

Residues 1-63 are domain I; sequence MISFLRGTVA…EDSMTLFGFA (63 aa). The tract at residues 64-140 is domain II; it reads DDDEREVFEV…LVPHGTAPAA (77 aa). The interval 140 to 144 is flexible linker; the sequence is AATTA. Residues 145–213 are domain III; it reads AEASWKPQVV…RAGNRVGSRG (69 aa).

This sequence belongs to the RuvA family. Homotetramer. Forms an RuvA(8)-RuvB(12)-Holliday junction (HJ) complex. HJ DNA is sandwiched between 2 RuvA tetramers; dsDNA enters through RuvA and exits via RuvB. An RuvB hexamer assembles on each DNA strand where it exits the tetramer. Each RuvB hexamer is contacted by two RuvA subunits (via domain III) on 2 adjacent RuvB subunits; this complex drives branch migration. In the full resolvosome a probable DNA-RuvA(4)-RuvB(12)-RuvC(2) complex forms which resolves the HJ.

It is found in the cytoplasm. The RuvA-RuvB-RuvC complex processes Holliday junction (HJ) DNA during genetic recombination and DNA repair, while the RuvA-RuvB complex plays an important role in the rescue of blocked DNA replication forks via replication fork reversal (RFR). RuvA specifically binds to HJ cruciform DNA, conferring on it an open structure. The RuvB hexamer acts as an ATP-dependent pump, pulling dsDNA into and through the RuvAB complex. HJ branch migration allows RuvC to scan DNA until it finds its consensus sequence, where it cleaves and resolves the cruciform DNA. This chain is Holliday junction branch migration complex subunit RuvA, found in Pseudarthrobacter chlorophenolicus (strain ATCC 700700 / DSM 12829 / CIP 107037 / JCM 12360 / KCTC 9906 / NCIMB 13794 / A6) (Arthrobacter chlorophenolicus).